Reading from the N-terminus, the 856-residue chain is Glucans biosynthesis glucosyltransferase H (856 aa).

A run of 6 helical transmembrane segments spans residues 144–164 (ILLVLMLGQTIVAGWYMKGIM), 198–218 (ILIMFGILFCWVSAGFWTALM), 517–537 (VFLTGVMSYLSAPLWFFFLVL), 574–594 (LFSTTIVLLFLPKLLSIILIW), 608–628 (TLSMLLEMLFSMLLAPVRMIF), and 691–711 (IVGSLMLSIPVSVISSRVGLG).

The protein belongs to the glycosyltransferase 2 family. OpgH subfamily.

The protein resides in the cell inner membrane. Its pathway is glycan metabolism; osmoregulated periplasmic glucan (OPG) biosynthesis. In terms of biological role, involved in the biosynthesis of osmoregulated periplasmic glucans (OPGs). The chain is Glucans biosynthesis glucosyltransferase H from Pseudomonas fluorescens (strain Pf0-1).